The following is a 2055-amino-acid chain: Citron rho-interacting kinase (2055 aa).

Residues 97–359 (FEVRSLVGCG…FEGLCCHPFF (263 aa)) enclose the Protein kinase domain. ATP contacts are provided by residues 103–111 (VGCGHFAEV) and Lys126. The active-site Proton acceptor is Asp221. An AGC-kinase C-terminal domain is found at 360–430 (ARTDWNNIRN…SKALGYLGRS (71 aa)). The segment at 375-398 (VPTLKSDDDTSNFDEPEKNSWVSS) is disordered. 3 coiled-coil regions span residues 457-747 (LQDS…AQVS), 773-1238 (IKKD…LEYQ), and 1284-1318 (YNELKLALEKEKARCAELEEALQKTRIELRSAREE). Residues 1349–1376 (PEHQPSAMSLLAPPSSRRKEASTPEEFS) form a disordered region. Residues 1353–1363 (PSAMSLLAPPS) are compositionally biased toward low complexity. Basic and acidic residues predominate over residues 1365-1376 (RRKEASTPEEFS). A Phorbol-ester/DAG-type zinc finger spans residues 1388–1437 (PHRFNVGLNMRATKCAVCLDTVHFGRQASKCLECQVMCHPKCSTCLPATC). The PH domain maps to 1469–1589 (SLHLEGWMKV…WVTALESVVA (121 aa)). The CNH domain maps to 1617-1907 (RLDMNCTLPF…RYLGPAISSG (291 aa)). A disordered region spans residues 1932–2040 (SGTEQHRVPS…RGRLPAGAVR (109 aa)). Residues 1939–1948 (VPSTSRSSPN) show a composition bias toward polar residues. Residues 1974–2031 (SHPREPSTPHRYRDREGRTELRRDKSPGRPLEREKSPGRMLSTRRERSPGRLFEDSSR) are compositionally biased toward basic and acidic residues.

It belongs to the protein kinase superfamily. AGC Ser/Thr protein kinase family. In terms of assembly, homodimer. Directly interacts with KIF14 depending on the activation state (stronger interaction with the kinase-dead form). Interacts with TTC3.

The protein resides in the cytoplasm. It carries out the reaction L-seryl-[protein] + ATP = O-phospho-L-seryl-[protein] + ADP + H(+). It catalyses the reaction L-threonyl-[protein] + ATP = O-phospho-L-threonyl-[protein] + ADP + H(+). Plays a role in cytokinesis. Required for KIF14 localization to the central spindle and midbody. Putative RHO/RAC effector that binds to the GTP-bound forms of RHO and RAC1. It probably binds p21 with a tighter specificity in vivo. Displays serine/threonine protein kinase activity. Plays an important role in the regulation of cytokinesis and the development of the central nervous system. Phosphorylates MYL9/MLC2. The polypeptide is Citron rho-interacting kinase (Rattus norvegicus (Rat)).